The sequence spans 293 residues: MTVFKHIAIIGLGLIGSSAARATKAYCPDVTVSLYDKSEFVRDRARALNLGDNVTDDIQDAVREADLVLLCVPVRAMGIVAAAMAPALKKDVIICDTGSVKVSVIKTLQDNLPNHIIVPSHPLAGTENNGPDAGFAELFQDHPVILTPDAHTPAQAIAYIADYWEEIGGRINLMSAEHHDHVLALTSHLPHVIAYQLIGMVSGYEKKSRTPIMRYSAGSFRDATRVAASEPRLWQDIMLENAPALLPVLDHFIADLKKLRTAIASQDGDYLLEHFKESQKARLALKTDHDIRP.

Positions 5-293 (KHIAIIGLGL…ALKTDHDIRP (289 aa)) constitute a Prephenate/arogenate dehydrogenase domain. 6–30 (HIAIIGLGLIGSSAARATKAYCPDV) is an NAD(+) binding site.

The protein belongs to the prephenate/arogenate dehydrogenase family. Homodimer.

The catalysed reaction is L-arogenate + NAD(+) = L-tyrosine + CO2 + NADH. It catalyses the reaction prephenate + NAD(+) = 3-(4-hydroxyphenyl)pyruvate + CO2 + NADH. It participates in amino-acid biosynthesis; L-tyrosine biosynthesis; (4-hydroxyphenyl)pyruvate from prephenate (NAD(+) route): step 1/1. The protein operates within amino-acid biosynthesis; L-tyrosine biosynthesis; L-tyrosine from L-arogenate (NAD(+) route): step 1/1. With respect to regulation, insensitive to feedback inhibition by L-tyrosine. Functionally, can function as either prephenate dehydrogenase or as arogenate dehydrogenase in the biosynthesis of L-tyrosine. Catalyzes two analogous reactions: converts prephenate to 4-hydroxyphenylpyruvate and transforms L-arogenate to L-tyrosine. Is not able to utilize NADP(+) instead of NAD(+) as cosubstrate. The sequence is that of Cyclohexadienyl dehydrogenase from Zymomonas mobilis subsp. mobilis (strain ATCC 31821 / ZM4 / CP4).